We begin with the raw amino-acid sequence, 337 residues long: ATP-dependent 6-phosphofructokinase (337 aa).

Gly11 lines the ATP pocket. 21-25 (RAVVR) serves as a coordination point for ADP. ATP is bound by residues 72 to 73 (RY) and 102 to 105 (GDGS). A Mg(2+)-binding site is contributed by Asp103. Substrate is bound at residue 125-127 (TID). Asp127 serves as the catalytic Proton acceptor. Arg154 is a binding site for ADP. Substrate is bound by residues Arg162 and 169 to 171 (MGR). ADP-binding positions include 185–187 (GAD), Lys212, and 214–216 (KNH). Residues Glu223, Arg245, and 251–254 (HILR) each bind substrate.

Belongs to the phosphofructokinase type A (PFKA) family. ATP-dependent PFK group I subfamily. Prokaryotic clade 'B1' sub-subfamily. In terms of assembly, homotetramer. The cofactor is Mg(2+).

Its subcellular location is the cytoplasm. It carries out the reaction beta-D-fructose 6-phosphate + ATP = beta-D-fructose 1,6-bisphosphate + ADP + H(+). Its pathway is carbohydrate degradation; glycolysis; D-glyceraldehyde 3-phosphate and glycerone phosphate from D-glucose: step 3/4. With respect to regulation, allosterically activated by ADP and other diphosphonucleosides, and allosterically inhibited by phosphoenolpyruvate. Functionally, catalyzes the phosphorylation of D-fructose 6-phosphate to fructose 1,6-bisphosphate by ATP, the first committing step of glycolysis. This Streptococcus pyogenes serotype M4 (strain MGAS10750) protein is ATP-dependent 6-phosphofructokinase.